The primary structure comprises 312 residues: Olfactory receptor 8K3 (312 aa).

At 1–25 (MEQHNLTTVNEFILTGITDIAELQA) the chain is on the extracellular side. Asn5 carries N-linked (GlcNAc...) asparagine glycosylation. The helical transmembrane segment at 26 to 46 (PLFALFLMIYVISVMGNLGMI) threads the bilayer. Topologically, residues 47 to 54 (VLTKLDSR) are cytoplasmic. Residues 55-75 (LQTPMYFFLRHLAFMDLGYST) traverse the membrane as a helical segment. Residues 76–99 (TVGPKMLVNFVVDKNIISYYFCAT) lie on the Extracellular side of the membrane. Residues Cys97 and Cys189 are joined by a disulfide bond. Residues 100–120 (QLAFFLVFIGSELFILSAMSY) traverse the membrane as a helical segment. Over 121 to 139 (DLYVAICNPLLYTVIMSRR) the chain is Cytoplasmic. Residues 140-160 (VCQVLVAIPYLYCTFISLLVT) form a helical membrane-spanning segment. Residues 161 to 197 (IKIFTLSFCGYNVISHFYCDSLPLLPLLCSNTHEIEL) are Extracellular-facing. A helical transmembrane segment spans residues 198 to 217 (IILIFAAIDLISSLLIVLLS). Over 218-236 (YLLILVAILRMNSAGRQKA) the chain is Cytoplasmic. Residues 237–257 (FSTCGAHLTVVIVFYGTLLFM) traverse the membrane as a helical segment. At 258–270 (YVQPKSSHSFDTD) the chain is on the extracellular side. The helical transmembrane segment at 271-291 (KVASIFYTLVIPMLNPLIYSL) threads the bilayer. The Cytoplasmic segment spans residues 292–312 (RNKDVKYALRRTWNNLCNIFV).

Belongs to the G-protein coupled receptor 1 family.

Its subcellular location is the cell membrane. In terms of biological role, odorant receptor. In Homo sapiens (Human), this protein is Olfactory receptor 8K3 (OR8K3).